We begin with the raw amino-acid sequence, 456 residues long: Cysteine--tRNA ligase (456 aa).

Residue cysteine 30 coordinates Zn(2+). The 'HIGH' region motif lies at 32–42; sequence MTVYDFCHIGH. Zn(2+)-binding residues include cysteine 211, histidine 236, and glutamate 240. Positions 268-272 match the 'KMSKS' region motif; it reads KMSKS. Lysine 271 lines the ATP pocket.

It belongs to the class-I aminoacyl-tRNA synthetase family. Monomer. The cofactor is Zn(2+).

Its subcellular location is the cytoplasm. It carries out the reaction tRNA(Cys) + L-cysteine + ATP = L-cysteinyl-tRNA(Cys) + AMP + diphosphate. In Dichelobacter nodosus (strain VCS1703A), this protein is Cysteine--tRNA ligase.